Here is a 198-residue protein sequence, read N- to C-terminus: tRNA (pseudouridine(54)-N(1))-methyltransferase (198 aa).

S-adenosyl-L-methionine is bound at residue L128.

Belongs to the methyltransferase superfamily. TrmY family. As to quaternary structure, homodimer.

It is found in the cytoplasm. It carries out the reaction pseudouridine(54) in tRNA + S-adenosyl-L-methionine = N(1)-methylpseudouridine(54) in tRNA + S-adenosyl-L-homocysteine + H(+). Specifically catalyzes the N1-methylation of pseudouridine at position 54 (Psi54) in tRNAs. In Haloferax volcanii (strain ATCC 29605 / DSM 3757 / JCM 8879 / NBRC 14742 / NCIMB 2012 / VKM B-1768 / DS2) (Halobacterium volcanii), this protein is tRNA (pseudouridine(54)-N(1))-methyltransferase.